Consider the following 201-residue polypeptide: MSSVPPTIGVLALQGDVREHIHALEQAGARARRIRRPDELDSIDGLILPGGESTTMGRLAAVFGLLTPLRERIAAGLPAYGTCAGMIMLADRLADGAPGQQTIGGIDMTVRRNAFGRQVASFEGTVEMTGVDGGPVEAVFIRAPWVESTGPGVQVLGRISRGDTAGRIVAVRQGRLLATSFHPELTGDTRVHRLFVDMVKG.

51–53 is an L-glutamine binding site; sequence GES. Cysteine 83 acts as the Nucleophile in catalysis. Residues arginine 112 and 141–142 each bind L-glutamine; that span reads IR. Residues histidine 182 and glutamate 184 each act as charge relay system in the active site.

This sequence belongs to the glutaminase PdxT/SNO family. In terms of assembly, in the presence of PdxS, forms a dodecamer of heterodimers. Only shows activity in the heterodimer.

It catalyses the reaction aldehydo-D-ribose 5-phosphate + D-glyceraldehyde 3-phosphate + L-glutamine = pyridoxal 5'-phosphate + L-glutamate + phosphate + 3 H2O + H(+). The catalysed reaction is L-glutamine + H2O = L-glutamate + NH4(+). It participates in cofactor biosynthesis; pyridoxal 5'-phosphate biosynthesis. In terms of biological role, catalyzes the hydrolysis of glutamine to glutamate and ammonia as part of the biosynthesis of pyridoxal 5'-phosphate. The resulting ammonia molecule is channeled to the active site of PdxS. The sequence is that of Pyridoxal 5'-phosphate synthase subunit PdxT from Thermobifida fusca (strain YX).